A 131-amino-acid chain; its full sequence is Profilin (131 aa).

This sequence belongs to the profilin family. As to quaternary structure, occurs in many kinds of cells as a complex with monomeric actin in a 1:1 ratio.

Its subcellular location is the cytoplasm. The protein localises to the cytoskeleton. In terms of biological role, binds to actin and affects the structure of the cytoskeleton. At high concentrations, profilin prevents the polymerization of actin, whereas it enhances it at low concentrations. By binding to PIP2, it inhibits the formation of IP3 and DG. The sequence is that of Profilin from Cucumis melo (Muskmelon).